A 100-amino-acid polypeptide reads, in one-letter code: NADH-quinone oxidoreductase subunit K (100 aa).

The next 3 helical transmembrane spans lie at Tyr-4–Ile-24, Ile-29–Phe-49, and Val-60–Ile-80.

It belongs to the complex I subunit 4L family. In terms of assembly, NDH-1 is composed of 14 different subunits. Subunits NuoA, H, J, K, L, M, N constitute the membrane sector of the complex.

Its subcellular location is the cell inner membrane. The enzyme catalyses a quinone + NADH + 5 H(+)(in) = a quinol + NAD(+) + 4 H(+)(out). In terms of biological role, NDH-1 shuttles electrons from NADH, via FMN and iron-sulfur (Fe-S) centers, to quinones in the respiratory chain. The immediate electron acceptor for the enzyme in this species is believed to be ubiquinone. Couples the redox reaction to proton translocation (for every two electrons transferred, four hydrogen ions are translocated across the cytoplasmic membrane), and thus conserves the redox energy in a proton gradient. In Persephonella marina (strain DSM 14350 / EX-H1), this protein is NADH-quinone oxidoreductase subunit K.